The sequence spans 336 residues: G patch domain and ankyrin repeat-containing protein 1 homolog (336 aa).

2 ANK repeats span residues Phe-123 to Thr-152 and Ser-156 to Thr-185. The region spanning Ala-240–Gln-286 is the G-patch domain.

The chain is G patch domain and ankyrin repeat-containing protein 1 homolog from Drosophila melanogaster (Fruit fly).